The chain runs to 147 residues: Large ribosomal subunit protein uL13 (147 aa).

It belongs to the universal ribosomal protein uL13 family. In terms of assembly, part of the 50S ribosomal subunit.

This protein is one of the early assembly proteins of the 50S ribosomal subunit, although it is not seen to bind rRNA by itself. It is important during the early stages of 50S assembly. The polypeptide is Large ribosomal subunit protein uL13 (Lactobacillus acidophilus (strain ATCC 700396 / NCK56 / N2 / NCFM)).